The primary structure comprises 354 residues: Uroporphyrinogen decarboxylase (354 aa).

Residues 27-31, Asp-77, Tyr-154, Thr-209, and His-327 contribute to the substrate site; that span reads RQAGR.

It belongs to the uroporphyrinogen decarboxylase family. In terms of assembly, homodimer.

It is found in the cytoplasm. It catalyses the reaction uroporphyrinogen III + 4 H(+) = coproporphyrinogen III + 4 CO2. It functions in the pathway porphyrin-containing compound metabolism; protoporphyrin-IX biosynthesis; coproporphyrinogen-III from 5-aminolevulinate: step 4/4. Functionally, catalyzes the decarboxylation of four acetate groups of uroporphyrinogen-III to yield coproporphyrinogen-III. This chain is Uroporphyrinogen decarboxylase, found in Sodalis glossinidius (strain morsitans).